A 625-amino-acid chain; its full sequence is tRNA uridine 5-carboxymethylaminomethyl modification enzyme MnmG (625 aa).

Residues 13–18 (GGGHAG), Val-125, and Ser-182 each bind FAD. 276-290 (GPRYCPSIEDKITRF) provides a ligand contact to NAD(+). Gln-373 contributes to the FAD binding site.

It belongs to the MnmG family. Homodimer. Heterotetramer of two MnmE and two MnmG subunits. Requires FAD as cofactor.

The protein resides in the cytoplasm. Functionally, NAD-binding protein involved in the addition of a carboxymethylaminomethyl (cmnm) group at the wobble position (U34) of certain tRNAs, forming tRNA-cmnm(5)s(2)U34. This is tRNA uridine 5-carboxymethylaminomethyl modification enzyme MnmG from Lactococcus lactis subsp. cremoris (strain SK11).